Here is a 179-residue protein sequence, read N- to C-terminus: Adenine phosphoribosyltransferase (179 aa).

It belongs to the purine/pyrimidine phosphoribosyltransferase family. In terms of assembly, homodimer.

The protein resides in the cytoplasm. It catalyses the reaction AMP + diphosphate = 5-phospho-alpha-D-ribose 1-diphosphate + adenine. The protein operates within purine metabolism; AMP biosynthesis via salvage pathway; AMP from adenine: step 1/1. Functionally, catalyzes a salvage reaction resulting in the formation of AMP, that is energically less costly than de novo synthesis. The polypeptide is Adenine phosphoribosyltransferase (Methylacidiphilum infernorum (isolate V4) (Methylokorus infernorum (strain V4))).